Consider the following 359-residue polypeptide: Peptide chain release factor 1 (359 aa).

Q236 carries the N5-methylglutamine modification.

This sequence belongs to the prokaryotic/mitochondrial release factor family. In terms of processing, methylated by PrmC. Methylation increases the termination efficiency of RF1.

The protein resides in the cytoplasm. In terms of biological role, peptide chain release factor 1 directs the termination of translation in response to the peptide chain termination codons UAG and UAA. In Streptococcus pneumoniae serotype 2 (strain D39 / NCTC 7466), this protein is Peptide chain release factor 1.